The chain runs to 210 residues: Somatotropin (210 aa).

The signal sequence occupies residues 1–22 (MGQVFLLMPVLLVSCFLSHGAA). Histidine 38 is a binding site for Zn(2+). Cysteine 71 and cysteine 183 are disulfide-bonded. Glutamate 192 contacts Zn(2+). Cysteine 200 and cysteine 208 form a disulfide bridge.

The protein belongs to the somatotropin/prolactin family.

It localises to the secreted. Growth hormone plays an important role in growth control and is involved in the regulation of several anabolic processes. Implicated as an osmoregulatory substance important for seawater adaptation. The chain is Somatotropin (gh) from Oncorhynchus masou (Cherry salmon).